Consider the following 119-residue polypeptide: Chorion class CA protein ERA.5 (119 aa).

The signal sequence occupies residues 1-21; that stretch reads MSTYTFVLFCLQICLIQNVYS. A left arm region spans residues 22 to 55; it reads QCLGRVGPGGPPVGPYGGPLGGPGYGPVGYGGCG. The segment at 56 to 103 is central domain; sequence GYGGSGIGNVAVAGELPVAGSSAVMGQVPVIGAVEFAGPACAVGSVSI. The segment at 104–119 is right arm; it reads SGACGPTCGCGGSPYY.

This sequence belongs to the chorion protein family.

Functionally, this protein is one of many from the eggshell of the silk moth. The chain is Chorion class CA protein ERA.5 (ERA.5) from Bombyx mori (Silk moth).